The sequence spans 885 residues: Rho GTPase-activating protein gacFF (885 aa).

Over residues 168–182 (TTTNNSNNSNSNNNN) the composition is skewed to low complexity. Residues 168 to 187 (TTTNNSNNSNSNNNNKQYNS) form a disordered region. Residues 222 to 249 (LINKIQNDSEQLKLVLSQVEQQIEFLKS) adopt a coiled-coil conformation. Residues 348–394 (SDIFSLLPTHLTLYVFSYLEPKELLILAQVSSQWQKLAGDNLLWVRF) form the F-box domain. The PH domain maps to 464-571 (SSSKEGWLYK…WMILLNSIIK (108 aa)). Low complexity-rich tracts occupy residues 594–622 (NNVY…NNNN) and 629–648 (LPPL…SSTG). The tract at residues 594–680 (NNVYINNNNN…GGGSGGNNNF (87 aa)) is disordered. The 185-residue stretch at 701–885 (VALSKILENQ…KYYDEIFIKK (185 aa)) folds into the Rho-GAP domain.

The protein localises to the cytoplasm. Functionally, rho GTPase-activating protein involved in the signal transduction pathway. The chain is Rho GTPase-activating protein gacFF (gacFF) from Dictyostelium discoideum (Social amoeba).